The following is a 290-amino-acid chain: tRNA dimethylallyltransferase (290 aa).

Residue 11 to 18 (GPTASGKS) participates in ATP binding. Position 13–18 (13–18 (TASGKS)) interacts with substrate. Interaction with substrate tRNA stretches follow at residues 36 to 39 (DSMQ) and 158 to 162 (QRIVR).

This sequence belongs to the IPP transferase family. As to quaternary structure, monomer. Mg(2+) serves as cofactor.

The catalysed reaction is adenosine(37) in tRNA + dimethylallyl diphosphate = N(6)-dimethylallyladenosine(37) in tRNA + diphosphate. Catalyzes the transfer of a dimethylallyl group onto the adenine at position 37 in tRNAs that read codons beginning with uridine, leading to the formation of N6-(dimethylallyl)adenosine (i(6)A). This Bartonella tribocorum (strain CIP 105476 / IBS 506) protein is tRNA dimethylallyltransferase.